Consider the following 528-residue polypeptide: Oxamate amidohydrolase proenzyme (528 aa).

The Nucleophile role is filled by threonine 342. 424-425 (GG) is a binding site for substrate.

It belongs to the gamma-glutamyltransferase family. Heterodimer that consists of a 35.5 kDa large (alpha) subunit and a 20 kDa small (beta) subunit, which are synthesized from a single polypeptide. Cleaved by autocatalysis into a large (alpha) and a small (beta) subunit.

The catalysed reaction is oxamate + H2O = oxalate + NH4(+). Involved in the uric acid degradation pathway. Catalyzes the conversion of oxamate to oxalate. The protein is Oxamate amidohydrolase proenzyme of Klebsiella pneumoniae subsp. pneumoniae (strain ATCC 700721 / MGH 78578).